The sequence spans 240 residues: UDP-2,3-diacylglucosamine hydrolase (240 aa).

Asp-8, His-10, Asp-41, Asn-79, and His-114 together coordinate Mn(2+). Residue 79–80 (NR) coordinates substrate. Substrate is bound by residues Asp-122, Ser-160, Asn-164, Lys-167, and His-195. Mn(2+) is bound by residues His-195 and His-197.

It belongs to the LpxH family. It depends on Mn(2+) as a cofactor.

The protein localises to the cell inner membrane. It carries out the reaction UDP-2-N,3-O-bis[(3R)-3-hydroxytetradecanoyl]-alpha-D-glucosamine + H2O = 2-N,3-O-bis[(3R)-3-hydroxytetradecanoyl]-alpha-D-glucosaminyl 1-phosphate + UMP + 2 H(+). The protein operates within glycolipid biosynthesis; lipid IV(A) biosynthesis; lipid IV(A) from (3R)-3-hydroxytetradecanoyl-[acyl-carrier-protein] and UDP-N-acetyl-alpha-D-glucosamine: step 4/6. In terms of biological role, hydrolyzes the pyrophosphate bond of UDP-2,3-diacylglucosamine to yield 2,3-diacylglucosamine 1-phosphate (lipid X) and UMP by catalyzing the attack of water at the alpha-P atom. Involved in the biosynthesis of lipid A, a phosphorylated glycolipid that anchors the lipopolysaccharide to the outer membrane of the cell. The chain is UDP-2,3-diacylglucosamine hydrolase from Escherichia coli O17:K52:H18 (strain UMN026 / ExPEC).